The chain runs to 59 residues: Large ribosomal subunit protein uL30 (59 aa).

Belongs to the universal ribosomal protein uL30 family. As to quaternary structure, part of the 50S ribosomal subunit.

This Clostridium botulinum (strain ATCC 19397 / Type A) protein is Large ribosomal subunit protein uL30.